A 93-amino-acid polypeptide reads, in one-letter code: uncharacterized protein (93 aa).

Positions 26–73 (NRGTIFRPMTRNSGIVGRRGGPVAPAPFRNNVQKPGTRPPGFKPPSGV) are disordered.

This is an uncharacterized protein from Caenorhabditis elegans.